The sequence spans 492 residues: Tyrosinase-like protein 1 (492 aa).

The signal sequence occupies residues M1–C22. Cu cation-binding residues include H147, H155, H164, H289, H293, and H316. Residues S472–I492 form a disordered region. The span at S482–I492 shows a compositional bias: polar residues.

Requires Cu(2+) as cofactor. In terms of tissue distribution, prismatic layer of shell (at protein level). Expressed primarily in the mantle with highest level in the mantle edge and lower level in the mantle pallium.

It localises to the secreted. The polypeptide is Tyrosinase-like protein 1 (Margaritifera margaritifera (Freshwater pearl mussel)).